Here is a 256-residue protein sequence, read N- to C-terminus: Tryptophan synthase alpha chain (256 aa).

Active-site proton acceptor residues include Glu-46 and Asp-57.

This sequence belongs to the TrpA family. Tetramer of two alpha and two beta chains.

The enzyme catalyses (1S,2R)-1-C-(indol-3-yl)glycerol 3-phosphate + L-serine = D-glyceraldehyde 3-phosphate + L-tryptophan + H2O. It participates in amino-acid biosynthesis; L-tryptophan biosynthesis; L-tryptophan from chorismate: step 5/5. The alpha subunit is responsible for the aldol cleavage of indoleglycerol phosphate to indole and glyceraldehyde 3-phosphate. In Bacteroides thetaiotaomicron (strain ATCC 29148 / DSM 2079 / JCM 5827 / CCUG 10774 / NCTC 10582 / VPI-5482 / E50), this protein is Tryptophan synthase alpha chain.